A 499-amino-acid chain; its full sequence is MTEVPWVEKYRPRKLSEIVNQEKALEQVRAWVEAWLHGNPPKKKALLLAGPPGVGKTTTVYALANEYGFEVIELNASDERTYEKIERYVQAAYTMDILGKRRKLIFLDEADNIEPSGAREIAKLIDKARNPIIMSANHYWEVPREIRNKAQIVEYKRLTQRDIIKALVRILKREGLEVPKEVLYEIAKRANGDLRAAVNDLQTVVTGGVEDAVEVLAYRDTEKSVFQALAQLFATDNAKRAKLAVLGVDMMPNELLQWIDENVPYVYYRPEDIARAYEALSRADIYLGRAQRTGNYGLWKYATDMMTAGVAVAGIKKKGFVKIYPPKTIKLLTESKEERSLRDSVIKKIMSEMHMAKLEAIETLRYLRVIFENNPDLAAHFVVFLDLSEKEVEFITGDKEKAKTIWAKSMNIEKKLKKEGELEARAKEAERRVEAAEEEETMEAGEPEEELEEVEEEELTEEELEEAEEEIETVGKKEKPEKEKTKKGKQATLFDFLKK.

50–57 provides a ligand contact to ATP; the sequence is GPPGVGKT. The interval 428–499 is disordered; the sequence is EAERRVEAAE…QATLFDFLKK (72 aa). The segment covering 436-472 has biased composition (acidic residues); that stretch reads AEEEETMEAGEPEEELEEVEEEELTEEELEEAEEEIE. Residues 473 to 484 are compositionally biased toward basic and acidic residues; that stretch reads TVGKKEKPEKEK.

Belongs to the activator 1 small subunits family. RfcL subfamily. Heteromultimer composed of small subunits (RfcS) and large subunits (RfcL).

Its function is as follows. Part of the RFC clamp loader complex which loads the PCNA sliding clamp onto DNA. The chain is Replication factor C large subunit from Thermococcus kodakarensis (strain ATCC BAA-918 / JCM 12380 / KOD1) (Pyrococcus kodakaraensis (strain KOD1)).